A 320-amino-acid polypeptide reads, in one-letter code: Coproporphyrin III ferrochelatase (320 aa).

Residues His194 and Glu273 each coordinate Fe(2+).

This sequence belongs to the ferrochelatase family.

It localises to the cytoplasm. It catalyses the reaction Fe-coproporphyrin III + 2 H(+) = coproporphyrin III + Fe(2+). It participates in porphyrin-containing compound metabolism; protoheme biosynthesis. Its function is as follows. Involved in coproporphyrin-dependent heme b biosynthesis. Catalyzes the insertion of ferrous iron into coproporphyrin III to form Fe-coproporphyrin III. The chain is Coproporphyrin III ferrochelatase from Symbiobacterium thermophilum (strain DSM 24528 / JCM 14929 / IAM 14863 / T).